A 172-amino-acid chain; its full sequence is Small ribosomal subunit protein uS5 (172 aa).

An S5 DRBM domain is found at 16-79 (LKEKLVHINR…EDGKKNVIKV (64 aa)).

It belongs to the universal ribosomal protein uS5 family. As to quaternary structure, part of the 30S ribosomal subunit. Contacts proteins S4 and S8.

Functionally, with S4 and S12 plays an important role in translational accuracy. In terms of biological role, located at the back of the 30S subunit body where it stabilizes the conformation of the head with respect to the body. In Chlorobium phaeobacteroides (strain DSM 266 / SMG 266 / 2430), this protein is Small ribosomal subunit protein uS5.